We begin with the raw amino-acid sequence, 92 residues long: Small ribosomal subunit protein uS19 (92 aa).

This sequence belongs to the universal ribosomal protein uS19 family.

Protein S19 forms a complex with S13 that binds strongly to the 16S ribosomal RNA. This chain is Small ribosomal subunit protein uS19, found in Exiguobacterium sibiricum (strain DSM 17290 / CCUG 55495 / CIP 109462 / JCM 13490 / 255-15).